Reading from the N-terminus, the 353-residue chain is uncharacterized protein (353 aa).

Positions M1–G24 are cleaved as a signal peptide.

Belongs to the chlamydial CPn_1058/CT_355/TC_0634 family.

This is an uncharacterized protein from Chlamydia trachomatis serovar D (strain ATCC VR-885 / DSM 19411 / UW-3/Cx).